We begin with the raw amino-acid sequence, 478 residues long: tRNA(Ile)-lysidine synthase (478 aa).

Residue 27–32 participates in ATP binding; it reads SGGSDS.

This sequence belongs to the tRNA(Ile)-lysidine synthase family.

The protein resides in the cytoplasm. It carries out the reaction cytidine(34) in tRNA(Ile2) + L-lysine + ATP = lysidine(34) in tRNA(Ile2) + AMP + diphosphate + H(+). Its function is as follows. Ligates lysine onto the cytidine present at position 34 of the AUA codon-specific tRNA(Ile) that contains the anticodon CAU, in an ATP-dependent manner. Cytidine is converted to lysidine, thus changing the amino acid specificity of the tRNA from methionine to isoleucine. The protein is tRNA(Ile)-lysidine synthase of Rickettsia africae (strain ESF-5).